The following is a 612-amino-acid chain: Elongation factor 4 (612 aa).

Residues 11–193 enclose the tr-type G domain; the sequence is KHIRNFAIVA…KVVKDIPAPS (183 aa). GTP contacts are provided by residues 23–28 and 140–143; these read DHGKST and NKID.

The protein belongs to the TRAFAC class translation factor GTPase superfamily. Classic translation factor GTPase family. LepA subfamily.

The protein resides in the cell membrane. The catalysed reaction is GTP + H2O = GDP + phosphate + H(+). In terms of biological role, required for accurate and efficient protein synthesis under certain stress conditions. May act as a fidelity factor of the translation reaction, by catalyzing a one-codon backward translocation of tRNAs on improperly translocated ribosomes. Back-translocation proceeds from a post-translocation (POST) complex to a pre-translocation (PRE) complex, thus giving elongation factor G a second chance to translocate the tRNAs correctly. Binds to ribosomes in a GTP-dependent manner. This is Elongation factor 4 from Lactobacillus helveticus (strain DPC 4571).